Here is a 463-residue protein sequence, read N- to C-terminus: Cysteine--tRNA ligase (463 aa).

Cysteine 29 lines the Zn(2+) pocket. The short motif at 31-41 (PTVYNYAHIGN) is the 'HIGH' region element. The Zn(2+) site is built by cysteine 211, histidine 236, and glutamate 240. The 'KMSKS' region signature appears at 269–273 (KMSKS). Lysine 272 serves as a coordination point for ATP.

Belongs to the class-I aminoacyl-tRNA synthetase family. In terms of assembly, monomer. Zn(2+) serves as cofactor.

The protein localises to the cytoplasm. It catalyses the reaction tRNA(Cys) + L-cysteine + ATP = L-cysteinyl-tRNA(Cys) + AMP + diphosphate. The chain is Cysteine--tRNA ligase from Caulobacter vibrioides (strain ATCC 19089 / CIP 103742 / CB 15) (Caulobacter crescentus).